A 295-amino-acid polypeptide reads, in one-letter code: Pyridoxal 5'-phosphate synthase subunit PdxS (295 aa).

Asp-25 contributes to the D-ribose 5-phosphate binding site. Lys-82 (schiff-base intermediate with D-ribose 5-phosphate) is an active-site residue. D-ribose 5-phosphate is bound at residue Gly-154. Arg-166 serves as a coordination point for D-glyceraldehyde 3-phosphate. D-ribose 5-phosphate is bound by residues Gly-215 and 236 to 237; that span reads GS.

Belongs to the PdxS/SNZ family. As to quaternary structure, in the presence of PdxT, forms a dodecamer of heterodimers.

It carries out the reaction aldehydo-D-ribose 5-phosphate + D-glyceraldehyde 3-phosphate + L-glutamine = pyridoxal 5'-phosphate + L-glutamate + phosphate + 3 H2O + H(+). The protein operates within cofactor biosynthesis; pyridoxal 5'-phosphate biosynthesis. Its function is as follows. Catalyzes the formation of pyridoxal 5'-phosphate from ribose 5-phosphate (RBP), glyceraldehyde 3-phosphate (G3P) and ammonia. The ammonia is provided by the PdxT subunit. Can also use ribulose 5-phosphate and dihydroxyacetone phosphate as substrates, resulting from enzyme-catalyzed isomerization of RBP and G3P, respectively. The polypeptide is Pyridoxal 5'-phosphate synthase subunit PdxS (Bacillus cereus (strain 03BB102)).